We begin with the raw amino-acid sequence, 78 residues long: UPF0335 protein RPR_04100 (78 aa).

Belongs to the UPF0335 family.

In Rickettsia peacockii (strain Rustic), this protein is UPF0335 protein RPR_04100.